The primary structure comprises 462 residues: tRNA pseudouridine(32) synthase, mitochondrial (462 aa).

The N-terminal 24 residues, 1-24 (MQRNNRLRNLFTVPVIMARQLKRN), are a transit peptide targeting the mitochondrion. An S4 RNA-binding domain is found at 127 to 188 (KLVDVFISEF…HEPPVTSRPI (62 aa)). Asp238 is a catalytic residue.

The protein belongs to the pseudouridine synthase RluA family.

The protein localises to the mitochondrion. It catalyses the reaction uridine(32) in tRNA = pseudouridine(32) in tRNA. Its function is as follows. Responsible for synthesis of pseudouridine from uracil-32 in mitochondrial transfer RNAs. The protein is tRNA pseudouridine(32) synthase, mitochondrial (PUS9) of Saccharomyces cerevisiae (strain ATCC 204508 / S288c) (Baker's yeast).